Reading from the N-terminus, the 356-residue chain is Replication factor C subunit 3 (356 aa).

At K20 the chain carries N6-acetyllysine. At S125 the chain carries Phosphoserine.

It belongs to the activator 1 small subunits family. Subunit of the RFC complex, an heteropentameric complex consisting of a large subunit RFC1 and four small subunits RFC2, RFC3, RFC4 and RFC5; the RFC complex interacts with PCNA. Forms an heterotetrameric complex with RFC2, RFC4 and RFC5; this complex has ATPase activity but is not stimulated by PCNA. The heterotetramer of subunits RFC2, RFC3, RFC4 and RFC5 interacts with RAD17. Interacts with CNTD1; this interaction facilitates crossover formation.

It localises to the nucleus. Functionally, subunit of the replication factor C (RFC) complex which acts during elongation of primed DNA templates by DNA polymerases delta and epsilon, and is necessary for ATP-dependent loading of proliferating cell nuclear antigen (PCNA) onto primed DNA. The chain is Replication factor C subunit 3 (RFC3) from Homo sapiens (Human).